Reading from the N-terminus, the 341-residue chain is tRNA N6-adenosine threonylcarbamoyltransferase (341 aa).

Fe cation-binding residues include His111 and His115. Substrate is bound by residues 134–138, Asp167, Gly180, and Asn276; that span reads LVSGG. Residue Asp304 participates in Fe cation binding.

It belongs to the KAE1 / TsaD family. Fe(2+) is required as a cofactor.

It localises to the cytoplasm. It carries out the reaction L-threonylcarbamoyladenylate + adenosine(37) in tRNA = N(6)-L-threonylcarbamoyladenosine(37) in tRNA + AMP + H(+). In terms of biological role, required for the formation of a threonylcarbamoyl group on adenosine at position 37 (t(6)A37) in tRNAs that read codons beginning with adenine. Is involved in the transfer of the threonylcarbamoyl moiety of threonylcarbamoyl-AMP (TC-AMP) to the N6 group of A37, together with TsaE and TsaB. TsaD likely plays a direct catalytic role in this reaction. The polypeptide is tRNA N6-adenosine threonylcarbamoyltransferase (Pseudomonas fluorescens (strain ATCC BAA-477 / NRRL B-23932 / Pf-5)).